A 424-amino-acid chain; its full sequence is 3-oxo-tetronate kinase (424 aa).

ATP is bound by residues Ser-260, 364–367, and Gly-407; that span reads GGET.

Belongs to the four-carbon acid sugar kinase family.

It catalyses the reaction 3-dehydro-L-erythronate + ATP = 3-dehydro-4-O-phospho-L-erythronate + ADP + H(+). The enzyme catalyses 3-dehydro-D-erythronate + ATP = 3-dehydro-4-O-phospho-D-erythronate + ADP + H(+). In terms of biological role, catalyzes the ATP-dependent phosphorylation of 3-oxo-tetronate to 3-oxo-tetronate 4-phosphate. In Pectobacterium atrosepticum (strain SCRI 1043 / ATCC BAA-672) (Erwinia carotovora subsp. atroseptica), this protein is 3-oxo-tetronate kinase.